Consider the following 339-residue polypeptide: Meiotic recombination protein rec7 (339 aa).

Its function is as follows. May be involved primarily in the early steps of meiotic recombination. This chain is Meiotic recombination protein rec7 (rec7), found in Schizosaccharomyces pombe (strain 972 / ATCC 24843) (Fission yeast).